The sequence spans 1249 residues: LRR receptor-like serine/threonine-protein kinase GSO1 (1249 aa).

The N-terminal stretch at 1–18 is a signal peptide; the sequence is MQPLVLLLLFILCFSGLG. Residues 19–876 lie on the Extracellular side of the membrane; the sequence is QPGIINNDLQ…QQGLSARSVV (858 aa). Residues Asn77 and Asn117 are each glycosylated (N-linked (GlcNAc...) asparagine). LRR repeat units follow at residues 94-118, 119-142, 144-166, 168-190, 191-214, 216-238, 239-262, 264-285, 286-310, 312-334, 336-359, 360-383, 385-407, 408-431, 433-455, 457-479, 480-503, 505-527, 528-551, 553-574, 576-598, 599-622, 623-646, 648-670, 671-694, 696-718, 719-742, 744-766, 767-791, 792-815, and 817-838; these read FDNL…LSNL, TSLE…LGSL, NIRS…LGNL, NLQM…LGRL, VRVQ…LGNC, DLTV…LGRL, ENLE…LGEM, QLQY…SLAD, LGNL…FWNM, QLLD…ICSN, TNLE…LSKC, QSLK…LFEL, ELTD…ISNL, TNLQ…ISAL, KLEV…IGNC, SLKM…IGRL, KELN…LGNC, QLNI…FGFL, KGLE…LISL, NLTR…LCGS, SYLS…LGNS, QNLD…LGKI, RELS…LVLC, KLTH…LGKL, SQLG…LFNC, KLLV…IGNL, GALN…MGKL, KLYE…IGQL, QDLQ…IGTL, SKLE…VGDM, and SLGY…QFSR. N-linked (GlcNAc...) asparagine glycosylation is found at Asn213, Asn228, and Asn248. Asn298, Asn309, and Asn334 each carry an N-linked (GlcNAc...) asparagine glycan. Residues Asn369, Asn393, and Asn406 are each glycosylated (N-linked (GlcNAc...) asparagine). An N-linked (GlcNAc...) asparagine glycan is attached at Asn454. N-linked (GlcNAc...) asparagine glycosylation is found at Asn537, Asn553, Asn558, and Asn565. N-linked (GlcNAc...) asparagine glycans are attached at residues Asn693 and Asn708. Residue Asn779 is glycosylated (N-linked (GlcNAc...) asparagine). Residue Asn822 is glycosylated (N-linked (GlcNAc...) asparagine). Residues 877-897 traverse the membrane as a helical segment; the sequence is IISAISALTAIGLMILVIALF. Residues 898–1249 are Cytoplasmic-facing; that stretch reads FKQRHDFFKK…NNRTAGYKKL (352 aa). Position 948 is a phosphothreonine (Thr948). The Protein kinase domain occupies 951 to 1240; the sequence is LSEEFMIGSG…ACDSLLHVYN (290 aa). ATP contacts are provided by residues 957-965 and Lys979; that span reads IGSGGSGKV. Phosphotyrosine is present on residues Tyr1027 and Tyr1071. The active-site Proton acceptor is Asp1084. Phosphotyrosine is present on residues Tyr1129 and Tyr1136.

The protein belongs to the protein kinase superfamily. Ser/Thr protein kinase family. As to quaternary structure, interacts with CIF1 and CIF2. As to expression, mostly expressed in siliques, seeds, developing embryos and seedlings, detected in flower buds and roots, but not in leaves or stems.

It is found in the cell membrane. It catalyses the reaction L-seryl-[protein] + ATP = O-phospho-L-seryl-[protein] + ADP + H(+). The catalysed reaction is L-threonyl-[protein] + ATP = O-phospho-L-threonyl-[protein] + ADP + H(+). In terms of biological role, together with GSO2, receptor-like serine/threonine-kinase required during the development of the epidermal surface in embryos and cotyledons. In coordination with GSO2, regulates root growth through control of cell division and cell fate specification. Controls seedling root growth by modulating sucrose response after germination. Receptor of the peptide hormones CIF1 and CIF2 required for contiguous Casparian strip diffusion barrier formation in roots. Required for localizing CASP proteins into the Casparian strip following an uninterrupted, ring-like domain, to trigger endodermal differentiation and thus regulate potassium ion (K) homeostasis. Involved in the maintenance of water transport and root pressure. May also be involved in the regulation of suberin accumulation in the endodermis. The sequence is that of LRR receptor-like serine/threonine-protein kinase GSO1 from Arabidopsis thaliana (Mouse-ear cress).